The sequence spans 1183 residues: MPITHVALSPSPIPAPTSCASPWIVIPTTIPPLNSSQFPTIPLSTILLPASGAPHPLWEAFANQPSLRAENGIKFPIQLTATTPIALTSVVVGFFSTGEEGLFDEETIEEMITKGLDDMRVVHTGDIVRVQWMSVLARVRLCEPVDQGVITEDTKVIVVKESRGKKTGEPEDGPLANGIDLNGVDDSDSDEDVLSQGDDDDENNVDLPGVSTFMDIATTLGTPSISTPLRNGPGASISGLSDAPKVVKFTAKPLSQKIPTTLLLPTPPAADDAEARVYVRVNELMGLGCFSGDWIGVASDHGLFGDRLPNGSRAWRPAKVYSLPELYAGKEKVKVLMKGCVYMSPLLHANLGSPSSVVLTKSPFMNPSNIQQGALLSPVTTAPPSSATPQIPPTAKEVTLLRISTPISTDRALQPSLLAGLKTYFETSRKMVKVGDLIPVLIDESLGRNLFSPAALLPPDAENAEEIPGAGDELLYGSHGGAGIGVNNTGKLCAAWFRVGTIAPTDEATNAFSNGMTSQQWGGVAIVDPGSTRMVQAGSERGRIPPTLNSPWEYYLNIVPPPIPNNPPPIHPALELPNNYISPVHRRLRELISAATSLRSIKLGLAPLAVLLTSTQRSIGKRLLAYRAASDVGVHIFHIDAYDIIGEGGQASDVKTEAYLRARSERAASCGIENCVLLISHIEAFTAERMAEALRDIVADMRIVIATTTDVDKVPEPVRNVFTHELEVGAPDEGERTGLLRQITQERGVRLAKEIDLSTIALKTAALVAGDLVDVVERAMTACSERMEGLAAEMEGVTVRDIQLAGGDASCLNKQDFEAAVDAARKNFADSIGAPKIPNVSWDDVGGLANVKSAVMETIQLPLERPELFAKGMKKRSGILFYGPPGTGKTLLAKAIATEFSLNFFSVKGPELLNMYIGESEANVRRVFQRARDARPCVVFFDELDSVAPKRGNQGDSGGVMDRIVSQLLAELDGMSEGKEGSGGVFVIGATNRPDLLDPALLRPGRFDKMLFLGVSDTHHKQLTILEALTRKFTLHNSLSLAKISETLPFTYTGADLYALCSDAMLKAITRQASKVDQKIKEMENPVSTAYFFDYLATPDDVAVAVTEDDFMEAKKELIGSVSQKELEHYDRVRQMFETVDEKKGDATVDKKGKGRAIEIMVDGPGTGGEGAFGDDGDEEGLY.

The segment at 161 to 205 (ESRGKKTGEPEDGPLANGIDLNGVDDSDSDEDVLSQGDDDDENNV) is disordered. Positions 183–204 (GVDDSDSDEDVLSQGDDDDENN) are enriched in acidic residues. The AAA-cassette D1 stretch occupies residues 576–785 (LPNNYISPVH…VERAMTACSE (210 aa)). The interval 878–1070 (GILFYGPPGT…CSDAMLKAIT (193 aa)) is AAA-cassette D2. 883-890 (GPPGTGKT) lines the ATP pocket. Residues 1160 to 1183 (IMVDGPGTGGEGAFGDDGDEEGLY) are disordered. Positions 1173-1183 (FGDDGDEEGLY) are enriched in acidic residues.

The protein belongs to the AAA ATPase family. As to quaternary structure, interacts with PEX1; forming the PEX1-PEX6 AAA ATPase complex, which is composed of a heterohexamer formed by a trimer of PEX1-PEX6 dimers.

The protein localises to the cytoplasm. It is found in the cytosol. The protein resides in the peroxisome membrane. It carries out the reaction ATP + H2O = ADP + phosphate + H(+). In terms of biological role, component of the PEX1-PEX6 AAA ATPase complex, a protein dislocase complex that mediates the ATP-dependent extraction of the PEX5 receptor from peroxisomal membranes, an essential step for PEX5 recycling. Specifically recognizes PEX5 monoubiquitinated at 'Cys-6', and pulls it out of the peroxisome lumen through the PEX2-PEX10-PEX12 retrotranslocation channel. Extraction by the PEX1-PEX6 AAA ATPase complex is accompanied by unfolding of the TPR repeats and release of bound cargo from PEX5. Regulates autophagy and biogenesis of peroxisomes and Woronin bodies. Plays important roles in mycelial growth and development and stress response. Is also essential for conidiation and fatty acid utilization. Required for nematode predation via trap formation. This is Peroxisomal ATPase PEX6 from Arthrobotrys oligospora (strain ATCC 24927 / CBS 115.81 / DSM 1491) (Nematode-trapping fungus).